A 531-amino-acid chain; its full sequence is Arginine--tRNA ligase (531 aa).

The 'HIGH' region motif lies at 113 to 123 (ANPTGPLHIGH).

This sequence belongs to the class-I aminoacyl-tRNA synthetase family. Monomer.

It is found in the cytoplasm. The enzyme catalyses tRNA(Arg) + L-arginine + ATP = L-arginyl-tRNA(Arg) + AMP + diphosphate. The chain is Arginine--tRNA ligase from Campylobacter fetus subsp. fetus (strain 82-40).